The primary structure comprises 160 residues: 3-dehydroquinate dehydratase (160 aa).

The active-site Proton acceptor is Tyr22. Substrate-binding residues include Asn73, His79, and Asp86. His99 (proton donor) is an active-site residue. Residues 100–101 (IS) and Arg110 contribute to the substrate site.

Belongs to the type-II 3-dehydroquinase family. Homododecamer.

The catalysed reaction is 3-dehydroquinate = 3-dehydroshikimate + H2O. It participates in metabolic intermediate biosynthesis; chorismate biosynthesis; chorismate from D-erythrose 4-phosphate and phosphoenolpyruvate: step 3/7. In terms of biological role, catalyzes a trans-dehydration via an enolate intermediate. In Campylobacter lari (strain RM2100 / D67 / ATCC BAA-1060), this protein is 3-dehydroquinate dehydratase.